A 233-amino-acid polypeptide reads, in one-letter code: Homeobox protein Hox-B6b (233 aa).

Positions 136–141 match the Antp-type hexapeptide motif; the sequence is IYPWMQ. A DNA-binding region (homeobox) is located at residues 155–214; it reads GRRGRQTYTRYQTLELEKEFHFNRYLTRRRRIEISHALCLTERQIKIWFQNRRMKWKKEN. A disordered region spans residues 213 to 233; the sequence is ENKLLNPSKTPEEEEEAEKKS. Over residues 224-233 the composition is skewed to acidic residues; that stretch reads EEEEEAEKKS.

This sequence belongs to the Antp homeobox family.

It is found in the nucleus. Functionally, sequence-specific transcription factor which is part of a developmental regulatory system that provides cells with specific positional identities on the anterior-posterior axis. The polypeptide is Homeobox protein Hox-B6b (hoxb6b) (Takifugu rubripes (Japanese pufferfish)).